A 141-amino-acid chain; its full sequence is MAKKVIKVVKLQIPAGKANPAPPVGPALGQAGVNIMAFCKEFNARTADQAGLIIPVEITVFEDRSFTFITKTPPAAVLLKKAAGIESGSGEPNRNKVATIKRDKVREIAEMKMPDLNAASIEAAMRMVEGTARSMGIVIED.

It belongs to the universal ribosomal protein uL11 family. As to quaternary structure, part of the ribosomal stalk of the 50S ribosomal subunit. Interacts with L10 and the large rRNA to form the base of the stalk. L10 forms an elongated spine to which L12 dimers bind in a sequential fashion forming a multimeric L10(L12)X complex. Post-translationally, one or more lysine residues are methylated.

Functionally, forms part of the ribosomal stalk which helps the ribosome interact with GTP-bound translation factors. The polypeptide is Large ribosomal subunit protein uL11 (Geobacillus sp. (strain WCH70)).